A 565-amino-acid polypeptide reads, in one-letter code: E3 ubiquitin-protein ligase ipaH7.8 (565 aa).

A disordered region spans residues 1 to 22 (MFSVNNTHSSVSCSPSINSNST). An interaction with target proteins region spans residues 1 to 262 (MFSVNNTHSS…YHGPQIYFSM (262 aa)). The span at 9–22 (SSVSCSPSINSNST) shows a compositional bias: low complexity. 9 LRR repeats span residues 58–79 (QEAV…PKHI), 80–97 (SALI…KLPA), 98–119 (FLKE…PESL), 120–137 (TTLS…VLPN), 138–157 (HLTS…ALPE), 158–179 (KLKF…PDKL), 180–199 (EILC…SDRN), 202–223 (RQKE…FSQL), and 225–248 (SSYR…QRLT). Residues 263-270 (SDGQQNTL) are linker. An E3 ubiquitin-protein ligase catalytic domain region spans residues 271–565 (HRPLADAVTA…SENGSRLHHS (295 aa)). Residues 273 to 565 (PLADAVTAWF…SENGSRLHHS (293 aa)) enclose the NEL domain. Cys357 (glycyl thioester intermediate) is an active-site residue.

The protein belongs to the LRR-containing bacterial E3 ligase family. Ubiquitinated in the presence of host E1 ubiquitin-activating enzyme, E2 ubiquitin-conjugating enzyme and ubiquitin.

The protein localises to the secreted. The protein resides in the host cytoplasm. It catalyses the reaction S-ubiquitinyl-[E2 ubiquitin-conjugating enzyme]-L-cysteine + [acceptor protein]-L-lysine = [E2 ubiquitin-conjugating enzyme]-L-cysteine + N(6)-ubiquitinyl-[acceptor protein]-L-lysine.. The protein operates within protein modification; protein ubiquitination. Functionally, E3 ubiquitin ligase effector protein that interferes with host's innate immunity. Functions to alter host cell physiology and promote bacterial survival in host tissues. Catalyzes ubiquitination of human gasdermins GSDMB and GSDMD, promoting their degradation by the proteasome, thereby preventing cell death. In contrast, activates host cell pyroptosis in mouse cells: catalyzes ubiquitination of mouse Nlrp1b allele 1 protein, releasing the cleaved C-terminal part of Nlrp1b, which polymerizes and forms the Nlrp1b inflammasome followed by host cell pyroptosis. Does not catalyze ubiquitination of mouse GSDMD. This is E3 ubiquitin-protein ligase ipaH7.8 from Shigella flexneri.